A 320-amino-acid chain; its full sequence is Fructose-1,6-bisphosphatase class 1 (320 aa).

Mg(2+)-binding residues include glutamate 93, aspartate 114, leucine 116, and aspartate 117. Substrate contacts are provided by residues 117–120 (DGSS), tyrosine 225, and lysine 256. Glutamate 262 contributes to the Mg(2+) binding site.

This sequence belongs to the FBPase class 1 family. As to quaternary structure, homotetramer. Mg(2+) serves as cofactor.

It localises to the cytoplasm. The enzyme catalyses beta-D-fructose 1,6-bisphosphate + H2O = beta-D-fructose 6-phosphate + phosphate. It functions in the pathway carbohydrate biosynthesis; gluconeogenesis. The chain is Fructose-1,6-bisphosphatase class 1 from Syntrophotalea carbinolica (strain DSM 2380 / NBRC 103641 / GraBd1) (Pelobacter carbinolicus).